The following is a 528-amino-acid chain: Probable protein phosphatase 2C 51 (528 aa).

Residues 8-28 (SLLNLGLLIIFFVFFFLVINC) traverse the membrane as a helical segment. Positions 71–445 (RCHTAAIQGR…DNMAAVVVPL (375 aa)) constitute a PPM-type phosphatase domain. Residues aspartate 117, glycine 118, aspartate 385, and aspartate 436 each coordinate Mn(2+).

The protein belongs to the PP2C family. It depends on Mg(2+) as a cofactor. Mn(2+) serves as cofactor.

It localises to the membrane. The catalysed reaction is O-phospho-L-seryl-[protein] + H2O = L-seryl-[protein] + phosphate. It catalyses the reaction O-phospho-L-threonyl-[protein] + H2O = L-threonyl-[protein] + phosphate. The sequence is that of Probable protein phosphatase 2C 51 from Arabidopsis thaliana (Mouse-ear cress).